The sequence spans 387 residues: Mitochondrial import inner membrane translocase subunit TIM50 (387 aa).

A mitochondrion-targeting transit peptide spans 1–26; it reads MSAVSVYPMCVRASRGLLRLRQGARC. Over 27-100 the chain is Mitochondrial matrix; it reads STAPPLLDVV…QKENTAYAKK (74 aa). Positions 61–93 are disordered; sequence LQQQQKSQEQPPPEGEDSGHKQDEQGEDKKQKE. The segment covering 77–93 has biased composition (basic and acidic residues); it reads DSGHKQDEQGEDKKQKE. A helical membrane pass occupies residues 101 to 121; the sequence is MVLRLAGIMGLGGTVGIVYIF. Over 122 to 387 the chain is Mitochondrial intermembrane; the sequence is GSNSVDEQGN…AGRFWSRKQQ (266 aa). Positions 178–321 constitute an FCP1 homology domain; sequence YYQPPYTLVL…YDLAAFLKTI (144 aa).

This sequence belongs to the TIM50 family. As to quaternary structure, component of the TIM23 complex at least composed of timm23, timm17 and timm50.

It localises to the mitochondrion inner membrane. In terms of biological role, essential component of the TIM23 complex, a complex that mediates the translocation of transit peptide-containing proteins across the mitochondrial inner membrane. This Danio rerio (Zebrafish) protein is Mitochondrial import inner membrane translocase subunit TIM50 (timm50).